The chain runs to 156 residues: MSRRGTAEKRTAKSDPIFRNRLVNMVVNRIMKDGKKSLAYQILYRAVKKIQQKTETNPLLVLRQAIRRVTPNIGVKTRRNKKGSTRKVPIEIGSKQGRALAIRWLLEASQKRPGRNMAFKLSSELVDAAKGGGGAIRKKEATHRMAEANRALAHFR.

This sequence belongs to the universal ribosomal protein uS7 family. As to quaternary structure, part of the 30S ribosomal subunit.

The protein resides in the plastid. The protein localises to the chloroplast. Functionally, one of the primary rRNA binding proteins, it binds directly to 16S rRNA where it nucleates assembly of the head domain of the 30S subunit. In Triticum aestivum (Wheat), this protein is Small ribosomal subunit protein uS7cz/uS7cy (rps7-A).